The primary structure comprises 229 residues: Transcriptional regulatory protein CreB (229 aa).

A Response regulatory domain is found at 5–119 (TVWLVEDEQG…EVCARVRTLL (115 aa)). Asp-54 carries the 4-aspartylphosphate modification. Residues 129–228 (SPVIRIGHFE…HRGMGYSLRG (100 aa)) constitute a DNA-binding region (ompR/PhoB-type).

Phosphorylated by CreC.

The protein resides in the cytoplasm. In terms of biological role, member of the two-component regulatory system CreC/CreB involved in catabolic regulation. In Escherichia coli (strain K12), this protein is Transcriptional regulatory protein CreB (creB).